Here is a 286-residue protein sequence, read N- to C-terminus: Fructose-bisphosphate aldolase (286 aa).

Ser50 provides a ligand contact to D-glyceraldehyde 3-phosphate. Asp85 serves as the catalytic Proton donor. 4 residues coordinate Zn(2+): His86, Asp107, Glu137, and His181. Gly182 contacts dihydroxyacetone phosphate. His209 lines the Zn(2+) pocket. Dihydroxyacetone phosphate is bound by residues 210–212 (GGT) and 231–234 (NVNT).

The protein belongs to the class II fructose-bisphosphate aldolase family. It depends on Zn(2+) as a cofactor.

It catalyses the reaction beta-D-fructose 1,6-bisphosphate = D-glyceraldehyde 3-phosphate + dihydroxyacetone phosphate. Its pathway is carbohydrate degradation; glycolysis; D-glyceraldehyde 3-phosphate and glycerone phosphate from D-glucose: step 4/4. Catalyzes the aldol condensation of dihydroxyacetone phosphate (DHAP or glycerone-phosphate) with glyceraldehyde 3-phosphate (G3P) to form fructose 1,6-bisphosphate (FBP) in gluconeogenesis and the reverse reaction in glycolysis. This is Fructose-bisphosphate aldolase (fba) from Staphylococcus aureus (strain MSSA476).